The primary structure comprises 610 residues: Glutamine--fructose-6-phosphate aminotransferase [isomerizing] (610 aa).

Catalysis depends on C2, which acts as the Nucleophile; for GATase activity. The Glutamine amidotransferase type-2 domain maps to 2-218; the sequence is CGIVGAVAQR…EGDVAEITRR (217 aa). SIS domains follow at residues 286 to 426 and 459 to 600; these read AADI…EQGR and LATD…VDQP. K605 acts as the For Fru-6P isomerization activity in catalysis.

Homodimer.

The protein resides in the cytoplasm. It carries out the reaction D-fructose 6-phosphate + L-glutamine = D-glucosamine 6-phosphate + L-glutamate. In terms of biological role, catalyzes the first step in hexosamine metabolism, converting fructose-6P into glucosamine-6P using glutamine as a nitrogen source. This chain is Glutamine--fructose-6-phosphate aminotransferase [isomerizing], found in Vibrio parahaemolyticus serotype O3:K6 (strain RIMD 2210633).